Here is a 493-residue protein sequence, read N- to C-terminus: Lysine--tRNA ligase (493 aa).

The Mg(2+) site is built by Glu-404 and Glu-411.

It belongs to the class-II aminoacyl-tRNA synthetase family. Homodimer. Requires Mg(2+) as cofactor.

It localises to the cytoplasm. The enzyme catalyses tRNA(Lys) + L-lysine + ATP = L-lysyl-tRNA(Lys) + AMP + diphosphate. The polypeptide is Lysine--tRNA ligase (Oceanobacillus iheyensis (strain DSM 14371 / CIP 107618 / JCM 11309 / KCTC 3954 / HTE831)).